A 402-amino-acid polypeptide reads, in one-letter code: S-adenosylmethionine synthase (402 aa).

137 to 142 (GQGSAD) serves as a coordination point for ATP.

This sequence belongs to the AdoMet synthase 2 family. Mg(2+) serves as cofactor.

It carries out the reaction L-methionine + ATP + H2O = S-adenosyl-L-methionine + phosphate + diphosphate. Its pathway is amino-acid biosynthesis; S-adenosyl-L-methionine biosynthesis; S-adenosyl-L-methionine from L-methionine: step 1/1. In terms of biological role, catalyzes the formation of S-adenosylmethionine from methionine and ATP. The chain is S-adenosylmethionine synthase from Pyrobaculum islandicum (strain DSM 4184 / JCM 9189 / GEO3).